Consider the following 94-residue polypeptide: Co-chaperonin GroES (94 aa).

It belongs to the GroES chaperonin family. In terms of assembly, heptamer of 7 subunits arranged in a ring. Interacts with the chaperonin GroEL.

Its subcellular location is the cytoplasm. Together with the chaperonin GroEL, plays an essential role in assisting protein folding. The GroEL-GroES system forms a nano-cage that allows encapsulation of the non-native substrate proteins and provides a physical environment optimized to promote and accelerate protein folding. GroES binds to the apical surface of the GroEL ring, thereby capping the opening of the GroEL channel. In Heliobacterium modesticaldum (strain ATCC 51547 / Ice1), this protein is Co-chaperonin GroES.